A 957-amino-acid polypeptide reads, in one-letter code: ERC protein 2 (957 aa).

Residues 1 to 13 (MYGSARTISNLEG) show a composition bias toward polar residues. The interval 1–44 (MYGSARTISNLEGSPSRSPRLPRSPRLGHRRTSSGGGGGTGKTL) is disordered. A compositionally biased stretch (low complexity) spans 14 to 25 (SPSRSPRLPRSP). 2 positions are modified to phosphoserine: Ser65 and Ser666. A coiled-coil region spans residues 140-917 (RQVRDSTMLD…RMKLMADNYD (778 aa)). A compositionally biased stretch (basic residues) spans 922 to 943 (HYHHHHHHHHHRSPGRSQHSNH). The segment at 922–957 (HYHHHHHHHHHRSPGRSQHSNHRPSPDQDDEEGIWA) is disordered. Over residues 948 to 957 (DQDDEEGIWA) the composition is skewed to acidic residues.

As to quaternary structure, interacts with BSN, ERC1, PPFIA1, PPFIA2, PPFIA3 and PPFIA4. Interacts through its C-terminus with the PDZ domain of RIMS1. Part of a complex consisting of ERC2, RIMS1 and UNC13A. In terms of tissue distribution, expressed throughout the central nervous system, including hippocampus, cortex, cerebellum and olfactory bulb.

It is found in the cytoplasm. It localises to the synapse. Its subcellular location is the presynaptic active zone. The protein localises to the cytoskeleton. In terms of biological role, thought to be involved in the organization of the cytomatrix at the nerve terminals active zone (CAZ) which regulates neurotransmitter release. Seems to act together with BSN. May recruit liprin-alpha proteins to the CAZ. The chain is ERC protein 2 (Erc2) from Mus musculus (Mouse).